Consider the following 165-residue polypeptide: Nutritionally-regulated adipose and cardiac-enriched protein (165 aa).

Positions 1–47 (MRSAARVSRSNSHPRTRHPTRENEGTTWGSQPSRTERDGDRKCPPSI) are disordered. The segment covering 34–43 (RTERDGDRKC) has biased composition (basic and acidic residues). A helical membrane pass occupies residues 112 to 132 (GSLFLWLTLCALLGVVLVLYC).

Predominantly expressed in white adipose tissue (at protein level) and brown adipose tissue. Also detected in heart.

The protein localises to the cell membrane. The protein is Nutritionally-regulated adipose and cardiac-enriched protein (Nrac) of Mus musculus (Mouse).